The chain runs to 343 residues: MAAEKLRRGEDLTLEEAHDAASGMLGGMGTDESAELLSLLARKGETDEELLGVLEAVSEHSERVVPRNSGTVIDVCGTGGDGMSTLNVSTACAFVAAASGCTVAKHGNRSSSGCSGSADIFERLGCDLDQRPGDAASLLEDLNICFMYAPRYHPALAGIADARKKVGGRTVFNLVGPLCNPAGVRDQLVGVSSQDLLGRIPRILHRRGAGSAMAVMSDDGMDELSTSSHGSACILRGGEVYTERVDPEALGLHASSANELRIHSAGGAFHSFVAVLDGRAGRAMAETVELNAAAALVVGGISEGLADGIEAARVAIEGGAASDLLDRFVAKAGDPGMLREARE.

Residues glycine 77, 80–81 (GD), threonine 85, 87–90 (NVST), 105–113 (KHGNRSSSG), and serine 117 each bind 5-phospho-alpha-D-ribose 1-diphosphate. Glycine 77 is an anthranilate binding site. Serine 89 provides a ligand contact to Mg(2+). Asparagine 108 contacts anthranilate. Residue arginine 163 coordinates anthranilate. Aspartate 222 and glutamate 223 together coordinate Mg(2+).

The protein belongs to the anthranilate phosphoribosyltransferase family. As to quaternary structure, homodimer. Requires Mg(2+) as cofactor.

The enzyme catalyses N-(5-phospho-beta-D-ribosyl)anthranilate + diphosphate = 5-phospho-alpha-D-ribose 1-diphosphate + anthranilate. The protein operates within amino-acid biosynthesis; L-tryptophan biosynthesis; L-tryptophan from chorismate: step 2/5. Its function is as follows. Catalyzes the transfer of the phosphoribosyl group of 5-phosphorylribose-1-pyrophosphate (PRPP) to anthranilate to yield N-(5'-phosphoribosyl)-anthranilate (PRA). This Cenarchaeum symbiosum (strain A) protein is Anthranilate phosphoribosyltransferase.